Consider the following 530-residue polypeptide: Cytochrome P450 monooxygenase sttB (530 aa).

Residue asparagine 5 is glycosylated (N-linked (GlcNAc...) asparagine). Residues 24 to 44 form a helical membrane-spanning segment; the sequence is LPILTVALLTGIASAVYINVS. N-linked (GlcNAc...) asparagine glycosylation occurs at asparagine 230.

Belongs to the cytochrome P450 family. Requires heme as cofactor.

It is found in the membrane. The catalysed reaction is preaspterpenacid acid I + reduced [NADPH--hemoprotein reductase] + O2 = preaspterpenacid acid II + oxidized [NADPH--hemoprotein reductase] + H2O + H(+). Its pathway is secondary metabolite biosynthesis; terpenoid biosynthesis. Cytochrome P450 monooxygenase; part of the gene cluster that mediates the biosynthesis of aspterpenacids. Performs the C22-oxidative modification of the terpene synthase sttA product preaspterpenacid I to produce preaspterpenacid II. It has still to be determined how preaspterpenacid II is further modified to produce aspterpenacids. In Aspergillus terreus (strain NIH 2624 / FGSC A1156), this protein is Cytochrome P450 monooxygenase sttB.